A 309-amino-acid polypeptide reads, in one-letter code: Dihydroorotate dehydrogenase B (NAD(+)), catalytic subunit (309 aa).

Residues Ser21 and Lys45–Ala46 each bind FMN. Residues Lys45 and Asn69 to Leu73 contribute to the substrate site. 2 residues coordinate FMN: Asn99 and Asn127. Position 127 (Asn127) interacts with substrate. Cys130 (nucleophile) is an active-site residue. The FMN site is built by Lys165 and Ile191. Asn192–Thr193 lines the substrate pocket. FMN-binding positions include Gly217, Gly243 to Gly244, and Gly265 to Thr266.

It belongs to the dihydroorotate dehydrogenase family. Type 1 subfamily. Heterotetramer of 2 PyrK and 2 PyrD type B subunits. It depends on FMN as a cofactor.

The protein resides in the cytoplasm. It carries out the reaction (S)-dihydroorotate + NAD(+) = orotate + NADH + H(+). It functions in the pathway pyrimidine metabolism; UMP biosynthesis via de novo pathway; orotate from (S)-dihydroorotate (NAD(+) route): step 1/1. In terms of biological role, catalyzes the conversion of dihydroorotate to orotate with NAD(+) as electron acceptor. The sequence is that of Dihydroorotate dehydrogenase B (NAD(+)), catalytic subunit (pyrD) from Bacillus cereus (strain B4264).